Reading from the N-terminus, the 244-residue chain is Type III pantothenate kinase (244 aa).

8–15 (DQGNSACK) is a binding site for ATP. Substrate contacts are provided by residues Y88 and 94 to 97 (GADR). D96 serves as the catalytic Proton acceptor. D117 serves as a coordination point for K(+). T120 contributes to the ATP binding site. T175 lines the substrate pocket.

Belongs to the type III pantothenate kinase family. As to quaternary structure, homodimer. Requires NH4(+) as cofactor. It depends on K(+) as a cofactor.

It localises to the cytoplasm. The catalysed reaction is (R)-pantothenate + ATP = (R)-4'-phosphopantothenate + ADP + H(+). It functions in the pathway cofactor biosynthesis; coenzyme A biosynthesis; CoA from (R)-pantothenate: step 1/5. Functionally, catalyzes the phosphorylation of pantothenate (Pan), the first step in CoA biosynthesis. The protein is Type III pantothenate kinase of Porphyromonas gingivalis (strain ATCC BAA-308 / W83).